A 190-amino-acid chain; its full sequence is Nucleoside triphosphate pyrophosphatase (190 aa).

Residue Asp-69 is the Proton acceptor of the active site.

This sequence belongs to the Maf family. A divalent metal cation is required as a cofactor.

The protein localises to the cytoplasm. The catalysed reaction is a ribonucleoside 5'-triphosphate + H2O = a ribonucleoside 5'-phosphate + diphosphate + H(+). It catalyses the reaction a 2'-deoxyribonucleoside 5'-triphosphate + H2O = a 2'-deoxyribonucleoside 5'-phosphate + diphosphate + H(+). Functionally, nucleoside triphosphate pyrophosphatase. May have a dual role in cell division arrest and in preventing the incorporation of modified nucleotides into cellular nucleic acids. The protein is Nucleoside triphosphate pyrophosphatase of Helicobacter pylori (strain G27).